Consider the following 156-residue polypeptide: Small ribosomal subunit protein uS7 (156 aa).

The protein belongs to the universal ribosomal protein uS7 family. Part of the 30S ribosomal subunit. Contacts proteins S9 and S11.

In terms of biological role, one of the primary rRNA binding proteins, it binds directly to 16S rRNA where it nucleates assembly of the head domain of the 30S subunit. Is located at the subunit interface close to the decoding center, probably blocks exit of the E-site tRNA. This chain is Small ribosomal subunit protein uS7, found in Neisseria meningitidis serogroup C (strain 053442).